The following is a 506-amino-acid chain: Kynurenine 3-monooxygenase (506 aa).

This sequence belongs to the aromatic-ring hydroxylase family. KMO subfamily. The cofactor is FAD.

The protein localises to the mitochondrion outer membrane. It carries out the reaction L-kynurenine + NADPH + O2 + H(+) = 3-hydroxy-L-kynurenine + NADP(+) + H2O. It functions in the pathway cofactor biosynthesis; NAD(+) biosynthesis; quinolinate from L-kynurenine: step 1/3. Functionally, catalyzes the hydroxylation of L-kynurenine (L-Kyn) to form 3-hydroxy-L-kynurenine (L-3OHKyn). Required for synthesis of quinolinic acid. The chain is Kynurenine 3-monooxygenase (bna4) from Emericella nidulans (strain FGSC A4 / ATCC 38163 / CBS 112.46 / NRRL 194 / M139) (Aspergillus nidulans).